The sequence spans 276 residues: Large ribosomal subunit protein uL2 (276 aa).

2 disordered regions span residues 29-54 (PEKS…SRRR) and 224-276 (AMNP…RGQR). The segment covering 256-276 (YKTRSKKKPSSKLIVKRRGQR) has biased composition (basic residues).

Belongs to the universal ribosomal protein uL2 family. As to quaternary structure, part of the 50S ribosomal subunit. Forms a bridge to the 30S subunit in the 70S ribosome.

Its function is as follows. One of the primary rRNA binding proteins. Required for association of the 30S and 50S subunits to form the 70S ribosome, for tRNA binding and peptide bond formation. It has been suggested to have peptidyltransferase activity; this is somewhat controversial. Makes several contacts with the 16S rRNA in the 70S ribosome. The protein is Large ribosomal subunit protein uL2 of Maridesulfovibrio salexigens (strain ATCC 14822 / DSM 2638 / NCIMB 8403 / VKM B-1763) (Desulfovibrio salexigens).